The following is a 435-amino-acid chain: Protein lin-54 (435 aa).

Residues 73 to 136 form a disordered region; that stretch reads DEPIDTSSHR…PASLPRTVQP (64 aa). The segment covering 102–120 has biased composition (polar residues); sequence TPGSSQYTVRNLSNLSGSP. Residues 173–288 form the CRC domain; that stretch reads QRKPCNCTKS…KCKGCQNTET (116 aa). The tract at residues 175 to 188 is DNA-binding; sequence KPCNCTKSQCLKLY. Zn(2+) is bound by residues cysteine 177, cysteine 179, cysteine 184, cysteine 189, cysteine 191, cysteine 198, cysteine 201, cysteine 203, and cysteine 206. Residues 235–250 form a linker region; that stretch reads IGIARGGITDIERLHQ. The Zn(2+) site is built by cysteine 253, cysteine 255, cysteine 260, cysteine 265, cysteine 267, cysteine 274, cysteine 278, cysteine 280, and cysteine 283. Residues 253–266 are DNA-binding; the sequence is CHCKKSGCLKNYCE. Positions 415 to 435 are disordered; that stretch reads LTQDLDAAPTDDIPGPSTSTS.

The protein belongs to the lin-54 family. In terms of assembly, component of the DRM complex, at least composed of lin-9, lin-35, lin-37, lin-52, lin-53, lin-54- dpl-1 and efl-1.

The protein resides in the nucleus. It is found in the chromosome. Its function is as follows. Synthetic multivulva class B (synMuvB) protein. SynMuvB proteins are required to repress the induction of vulval development by Ras signaling and probably act by forming the multiprotein DRM complex that repress transcription. This Caenorhabditis elegans protein is Protein lin-54.